The sequence spans 253 residues: 5'-nucleotidase SurE (253 aa).

A divalent metal cation contacts are provided by Asp-8, Asp-9, Ser-39, and Asn-95.

This sequence belongs to the SurE nucleotidase family. A divalent metal cation serves as cofactor.

The protein resides in the cytoplasm. The catalysed reaction is a ribonucleoside 5'-phosphate + H2O = a ribonucleoside + phosphate. In terms of biological role, nucleotidase that shows phosphatase activity on nucleoside 5'-monophosphates. In Clostridium beijerinckii (strain ATCC 51743 / NCIMB 8052) (Clostridium acetobutylicum), this protein is 5'-nucleotidase SurE.